A 332-amino-acid polypeptide reads, in one-letter code: C4-dicarboxylate-binding periplasmic protein DctP (332 aa).

Residues 1-22 (MFKPLTLIAASILAVTSFNAAA) form the signal peptide.

Belongs to the bacterial solute-binding protein 7 family. In terms of assembly, the complex comprises the extracytoplasmic solute receptor protein DctP, and the two transmembrane proteins DctQ and DctM.

It localises to the periplasm. Part of the tripartite ATP-independent periplasmic (TRAP) transport system DctPQM involved in C4-dicarboxylates uptake. This Vibrio cholerae serotype O1 (strain ATCC 39315 / El Tor Inaba N16961) protein is C4-dicarboxylate-binding periplasmic protein DctP.